A 308-amino-acid polypeptide reads, in one-letter code: Probable manganese-dependent inorganic pyrophosphatase (308 aa).

Mn(2+) contacts are provided by histidine 9, aspartate 13, aspartate 15, aspartate 75, histidine 97, and aspartate 149.

The protein belongs to the PPase class C family. Mn(2+) is required as a cofactor.

The protein localises to the cytoplasm. It catalyses the reaction diphosphate + H2O = 2 phosphate + H(+). This chain is Probable manganese-dependent inorganic pyrophosphatase, found in Listeria welshimeri serovar 6b (strain ATCC 35897 / DSM 20650 / CCUG 15529 / CIP 8149 / NCTC 11857 / SLCC 5334 / V8).